Reading from the N-terminus, the 574-residue chain is Septation ring formation regulator EzrA (574 aa).

Topologically, residues 1–7 are extracellular; it reads MSSGIIL. A helical transmembrane segment spans residues 8–26; sequence LIVAIVLLVIIAYLVGVII. Topologically, residues 27–574 are cytoplasmic; it reads RKRNDSLITS…YEKTREHIRF (548 aa). Coiled-coil stretches lie at residues 102-141, 274-350, and 459-520; these read NFIRAKHEINSVESQLNLVEEDIASIREALNILKEQEEKN, ELVT…ETES, and QLEA…SFEA.

Belongs to the EzrA family.

It localises to the cell membrane. Negative regulator of FtsZ ring formation; modulates the frequency and position of FtsZ ring formation. Inhibits FtsZ ring formation at polar sites. Interacts either with FtsZ or with one of its binding partners to promote depolymerization. The sequence is that of Septation ring formation regulator EzrA from Streptococcus pyogenes serotype M1.